The primary structure comprises 957 residues: MSECGGRGGGGGSSSSSDDAEDEGGGGGPAGSGSLSPAPAASSEGRLRRGLRGASLMARRRPELLCGAVALGCALLLALKFTCSRAKDVIIPAKPPVSFFSSRSPVLDLFQGQLDYAEHIRRDSEVVLLFFYAPWCGQSIAARAEIEQAASRLSDQVLFVAINCWWNQGKCRKQKHFFYFPVIYLYHRSFGPIEYKGPMSAVYIEKFVRRVMKPLLYIPSQSELLDFLSNYEPGVLGYFEFSGSPQPPGYLTFFTSALHSLKKDYLGTVRFGVITNKHLAKLVSLVHSGSVYLHRHFNTSLVFPREVINYTAENICKWALENRETLVRWLWPHGGKSLLLNNELKKGPALFVFIPFNPLAESHPLIDEITEVALEYNNCHGDQVVERLLQHLRRVDAPAFKSLAPDPPARLPDPPLITASPCCNTVVLPRWHSISRTHNVCELCVNQTAGGLRPSSVSMPQCSFFEMAAALDSFYLKEQTFYHVVSDSIECSNFLSFYSPFSYYTACCRTINRGVAGFIDSEQGVFETPPVAFSSLEKKCEVESPGSVPHIEENRYLFPELETSSSSFTGLSCRTNKTLNIYLLDSNLFWLYAERLGAPSAARVKEFATIVDVKEESHYILDPKQALMKFTLESFIQNFSVLYSPLKRHLIGSDSTQFTSQRLITEVTTDTFWEVVLQKQDVLLLYYAQWCGFCPALNHVFIQLARLLPSDTFTVARIDVSQNDLPWEFMVDRLPTVLFFPCNRKDLSVKYPEDLPITLPNLLRFILHHSDPASDPRNLAGPPTAECLQNEAVLQQGHIAHLEREIRKLRAEIGTLQRAQVQVEARLASARRDEHRLLRQQHTLERQHDLLRLHSEQLQALYEHKTRELDEVARKLQELADASETLLTENTWLKILVATMEQRLEGRDGADDRVPPSKARSEHPEPPGAPRLPASTPLPANISSTLASEGSPENRTD.

The segment covering 1-13 (MSECGGRGGGGGS) has biased composition (gly residues). The segment at 1–47 (MSECGGRGGGGGSSSSSDDAEDEGGGGGPAGSGSLSPAPAASSEGRL) is disordered. Residues 32–44 (SGSLSPAPAASSE) show a composition bias toward low complexity. The chain crosses the membrane as a helical span at residues 64–84 (LLCGAVALGCALLLALKFTCS). The Thioredoxin 1 domain maps to 91 to 213 (IPAKPPVSFF…IEKFVRRVMK (123 aa)). 2 cysteine pairs are disulfide-bonded: Cys-441/Cys-444 and Cys-691/Cys-694. Residues 621-771 (LDPKQALMKF…LLRFILHHSD (151 aa)) form the Thioredoxin 2 domain. Residues 785–889 (AECLQNEAVL…ADASETLLTE (105 aa)) adopt a coiled-coil conformation. Residues 904–925 (LEGRDGADDRVPPSKARSEHPE) show a composition bias toward basic and acidic residues. Residues 904 to 957 (LEGRDGADDRVPPSKARSEHPEPPGAPRLPASTPLPANISSTLASEGSPENRTD) are disordered. Residues 941 to 951 (NISSTLASEGS) are compositionally biased toward polar residues.

It belongs to the protein disulfide isomerase family. In terms of assembly, interacts with the cytoplasmic part of DUOX1 and DUOX2. Interacts with TPO and CYBA.

It is found in the endoplasmic reticulum membrane. May act as a redox regulator involved in DUOX proteins folding. The interaction with DUOX1 and DUOX2 suggest that it belongs to a multiprotein complex constituting the thyroid H(2)O(2) generating system. It is however not sufficient to assist DUOX1 and DUOX2 in H(2)O(2) generation. The polypeptide is Thioredoxin domain-containing protein 11 (TXNDC11) (Bos taurus (Bovine)).